The primary structure comprises 475 residues: Splicing factor U2AF 65 kDa subunit (475 aa).

Positions 1–90 are disordered; it reads MSDFDEFERQ…RHEKKKKVRK (90 aa). N-acetylserine is present on Ser-2. Phosphoserine is present on Ser-2. Residues 2–93 are required for interaction with PRPF19; sequence SDFDEFERQL…KKKKVRKYWD (92 aa). Positions 7 to 22 are enriched in basic and acidic residues; sequence FERQLNENKQERDKEN. A 5-hydroxylysine; by JMJD6; alternate modification is found at Lys-15. Lys-15 is covalently cross-linked (Glycyl lysine isopeptide (Lys-Gly) (interchain with G-Cter in SUMO2); alternate). Residues 17-47 are necessary and sufficient to stimulate pre-mRNAs 3'-end cleavage in a CFIm complex-dependent manner; sequence ERDKENRHRKRSHSRSRSRDRKRRSRSRDRR. The segment covering 23-46 has biased composition (basic residues); it reads RHRKRSHSRSRSRDRKRRSRSRDR. A compositionally biased stretch (basic and acidic residues) spans 47–56; that stretch reads RNRDQRSASR. Lys-70 is covalently cross-linked (Glycyl lysine isopeptide (Lys-Gly) (interchain with G-Cter in SUMO2); alternate). An N6-acetyllysine; alternate modification is found at Lys-70. Ser-79 carries the phosphoserine modification. A compositionally biased stretch (basic residues) spans 79-89; that stretch reads SPRHEKKKKVR. RRM domains are found at residues 149–231, 259–337, and 385–466; these read RRLY…RPHD, HKLF…RASV, and LPEE…YCDP. At Lys-276 the chain carries 5-hydroxylysine; by JMJD6. Ser-294 carries the phosphoserine modification.

It belongs to the splicing factor SR family. Interacts with U2AF1L4. Heterodimer with U2AF1. Binds unphosphorylated SF1. Interacts with SCAF11 and SNW1. Interacts with ZRSR2/U2AF1-RS2. Interacts with RBM17. Interacts with PRPF19; the interaction is direct. Interacts with POLR2A (via the C-terminal domain); Interacts with PRPF19; the interaction is direct. Interacts with POLR2A (via the C-terminal domain); recruits PRPF19 and the Prp19 complex to the pre-mRNA. Interacts with KHDC4 (Isoform 2). Interacts with ZRSR2. Interacts with the SF3B complex composed of SF3B1, SF3B2, SF3B3, SF3B4, SF3B5, SF3B6 and PHF5A. Interacts (via N-terminus) with CPSF7 (via C-terminus); this interaction stimulates pre-mRNA 3'-end processing by promoting the recruitment of the CFIm complex to cleavage and polyadenylation signals. Interacts with ARGLU1; interaction may be involved in ARGLU1-mediated modulation of alternative splicing. In terms of processing, lysyl-hydroxylation at Lys-15 and Lys-276 affects the mRNA splicing activity of the protein, leading to regulate some, but not all, alternative splicing events.

It is found in the nucleus. In terms of biological role, plays a role in pre-mRNA splicing and 3'-end processing. By recruiting PRPF19 and the PRP19C/Prp19 complex/NTC/Nineteen complex to the RNA polymerase II C-terminal domain (CTD), and thereby pre-mRNA, may couple transcription to splicing. Required for the export of mRNA out of the nucleus, even if the mRNA is encoded by an intron-less gene. Positively regulates pre-mRNA 3'-end processing by recruiting the CFIm complex to cleavage and polyadenylation signals. The protein is Splicing factor U2AF 65 kDa subunit (U2af2) of Mus musculus (Mouse).